The primary structure comprises 196 residues: Small ribosomal subunit protein uS4c (196 aa).

The S4 RNA-binding domain maps to M89–N150.

This sequence belongs to the universal ribosomal protein uS4 family. Part of the 30S ribosomal subunit. Contacts protein S5. The interaction surface between S4 and S5 is involved in control of translational fidelity.

It is found in the plastid. Its subcellular location is the chloroplast. One of the primary rRNA binding proteins, it binds directly to 16S rRNA where it nucleates assembly of the body of the 30S subunit. Functionally, with S5 and S12 plays an important role in translational accuracy. The protein is Small ribosomal subunit protein uS4c (rps4) of Eleusine indica (Goosegrass).